Reading from the N-terminus, the 356-residue chain is Tyrosine recombinase XerS (356 aa).

The region spanning 16–121 (IMPWYVLDYY…ALSSLYKYLT (106 aa)) is the Core-binding (CB) domain. In terms of domain architecture, Tyr recombinase spans 169-354 (AFLDYVDKEY…VNDEQKNALD (186 aa)). Residues Arg-210, Lys-234, His-306, Arg-309, and His-332 contribute to the active site. Catalysis depends on Tyr-341, which acts as the O-(3'-phospho-DNA)-tyrosine intermediate.

It belongs to the 'phage' integrase family. XerS subfamily.

The protein localises to the cytoplasm. Its activity is regulated as follows. FtsK is required for recombination. Its function is as follows. Site-specific tyrosine recombinase, which acts by catalyzing the cutting and rejoining of the recombining DNA molecules. Essential to convert dimers of the bacterial chromosome into monomers to permit their segregation at cell division. The protein is Tyrosine recombinase XerS of Streptococcus pyogenes serotype M5 (strain Manfredo).